Here is a 413-residue protein sequence, read N- to C-terminus: Glutaminase (413 aa).

The tract at residues 23-307 is glutaminase; that stretch reads GELADYIPEL…LSDDMGLHLM (285 aa). Substrate contacts are provided by Ser-65, Asn-114, Glu-160, Asn-167, Tyr-191, Tyr-243, and Val-261. The STAS domain occupies 316-413; sequence AVRSITRDGD…SDGTICKERV (98 aa).

The protein belongs to the glutaminase family. In terms of assembly, homotetramer.

The catalysed reaction is L-glutamine + H2O = L-glutamate + NH4(+). The sequence is that of Glutaminase (glsA) from Corynebacterium glutamicum (strain ATCC 13032 / DSM 20300 / JCM 1318 / BCRC 11384 / CCUG 27702 / LMG 3730 / NBRC 12168 / NCIMB 10025 / NRRL B-2784 / 534).